Reading from the N-terminus, the 539-residue chain is MAAAVRVTAARARLRVVVRSLHAGVRSLCTQPVSVNERIENKRQAALLGGGQRRIDSQHKRGKLTARERISLLLDPGSFIESDMFVEHRCADFGMAADKNKFPGDSVVTGRGRINGRLVYVFSQDFTVFGGSLSGAHAQKICKIMDQAMTVGAPVIGLNDSGGARIQEGVESLAGYADIFLRNVSASGVIPQISLIMGPCAGGAVYSPALTDFTFMVKDTSYLFITGPDVVKSVTNEDVTQEELGGARTHTTMSGVAHRAFDNDVDALCNLREFFNYLPLSNQDPAPIRECHDPSDRLVPELDTVVPLESTRAYDMVDIIYSIVDERDFFEIMPNYAKNIIVGFARMNGRTVGIVGNQPKVASGCLDINSSVKGARFVRFCDAFNIPLITFVDVPGFLPGTAQEYGGIIRHGAKLLYAFAEATVPKITVITRKAYGGAYDVMSSKHLCGDTNYAWPTAEIAVMGAKGAVEIIFKGHENVEAAQAEYIEKFANPFPAAVRGFVDDIIQPSSTRARICCDLDVLASKKVQRPWRKHANIPL.

Residues 1-28 (MAAAVRVTAARARLRVVVRSLHAGVRSL) constitute a mitochondrion transit peptide. The region spanning 32 to 290 (PVSVNERIEN…SNQDPAPIRE (259 aa)) is the CoA carboxyltransferase N-terminal domain. Residues 32 to 533 (PVSVNERIEN…SKKVQRPWRK (502 aa)) form a carboxyltransferase region. Position 71 is a phosphoserine (Ser-71). Residue Lys-99 is modified to N6-acetyllysine; alternate. Position 99 is an N6-succinyllysine; alternate (Lys-99). The CoA carboxyltransferase C-terminal domain maps to 294-533 (PSDRLVPELD…SKKVQRPWRK (240 aa)). Positions 325 to 358 (DERDFFEIMPNYAKNIIVGFARMNGRTVGIVGNQ) are acyl-CoA binding. An N6-acetyllysine; alternate mark is found at Lys-474 and Lys-489. N6-succinyllysine; alternate is present on residues Lys-474 and Lys-489.

This sequence belongs to the AccD/PCCB family. As to quaternary structure, the holoenzyme is a dodecamer composed of 6 PCCA/alpha subunits and 6 PCCB/beta subunits.

Its subcellular location is the mitochondrion matrix. The enzyme catalyses propanoyl-CoA + hydrogencarbonate + ATP = (S)-methylmalonyl-CoA + ADP + phosphate + H(+). The catalysed reaction is butanoyl-CoA + hydrogencarbonate + ATP = (2S)-ethylmalonyl-CoA + ADP + phosphate + H(+). It functions in the pathway metabolic intermediate metabolism; propanoyl-CoA degradation; succinyl-CoA from propanoyl-CoA: step 1/3. In terms of biological role, this is one of the 2 subunits of the biotin-dependent propionyl-CoA carboxylase (PCC), a mitochondrial enzyme involved in the catabolism of odd chain fatty acids, branched-chain amino acids isoleucine, threonine, methionine, and valine and other metabolites. Propionyl-CoA carboxylase catalyzes the carboxylation of propionyl-CoA/propanoyl-CoA to D-methylmalonyl-CoA/(S)-methylmalonyl-CoA. Within the holoenzyme, the alpha subunit catalyzes the ATP-dependent carboxylation of the biotin carried by the biotin carboxyl carrier (BCC) domain, while the beta subunit then transfers the carboxyl group from carboxylated biotin to propionyl-CoA. Propionyl-CoA carboxylase also significantly acts on butyryl-CoA/butanoyl-CoA, which is converted to ethylmalonyl-CoA/(2S)-ethylmalonyl-CoA at a much lower rate. Other alternative minor substrates include (2E)-butenoyl-CoA/crotonoyl-CoA. In Sus scrofa (Pig), this protein is Propionyl-CoA carboxylase beta chain, mitochondrial.